The chain runs to 1007 residues: Serine/threonine-protein kinase atg1 (1007 aa).

The region spanning 30-336 is the Protein kinase domain; the sequence is YTRLSEIGRG…FDVYFAHKVL (307 aa). ATP is bound by residues 36-44 and Lys-59; that span reads IGRGSFAVV. The Proton acceptor role is filled by Asp-174. Disordered stretches follow at residues 343 to 489, 524 to 586, 795 to 817, and 878 to 900; these read LVAD…KEHA, GGQA…PTSA, RLPS…GSGT, and SRPG…DGGQ. Residues 373–387 are compositionally biased toward basic and acidic residues; that stretch reads MKRENALSGGVRDEP. The segment covering 396 to 410 has biased composition (polar residues); that stretch reads AMTQSPRPETPSTPM. Residues 477 to 489 show a composition bias toward basic and acidic residues; the sequence is KPVEKAKDEKEHA. The span at 534–555 shows a compositional bias: low complexity; the sequence is SGAAPGTPPAGGSSPHASPSKA. Over residues 563-579 the composition is skewed to basic and acidic residues; sequence SRADSAHVRQNSYDRRY. Low complexity predominate over residues 805-817; it reads SNLSVGSSLGSGT. The segment covering 887–896 has biased composition (basic and acidic residues); the sequence is DRADARRDNE.

Belongs to the protein kinase superfamily. Ser/Thr protein kinase family. APG1/unc-51/ULK1 subfamily. In terms of assembly, homodimer. Forms a ternary complex with ATG13 and ATG17.

The protein localises to the cytoplasm. The protein resides in the preautophagosomal structure membrane. The enzyme catalyses L-seryl-[protein] + ATP = O-phospho-L-seryl-[protein] + ADP + H(+). The catalysed reaction is L-threonyl-[protein] + ATP = O-phospho-L-threonyl-[protein] + ADP + H(+). Its function is as follows. Serine/threonine protein kinase involved in the cytoplasm to vacuole transport (Cvt) and found to be essential in autophagy, where it is required for the formation of autophagosomes. Involved in the clearance of protein aggregates which cannot be efficiently cleared by the proteasome. Required for selective autophagic degradation of the nucleus (nucleophagy) as well as for mitophagy which contributes to regulate mitochondrial quantity and quality by eliminating the mitochondria to a basal level to fulfill cellular energy requirements and preventing excess ROS production. Also involved in endoplasmic reticulum-specific autophagic process, in selective removal of ER-associated degradation (ERAD) substrates. Plays a key role in ATG9 and ATG23 cycling through the pre-autophagosomal structure and is necessary to promote ATG18 binding to ATG9 through phosphorylation of ATG9. Catalyzes phosphorylation of ATG4, decreasing the interaction between ATG4 and ATG8 and impairing deconjugation of PE-conjugated forms of ATG8. The sequence is that of Serine/threonine-protein kinase atg1 from Aspergillus niger (strain ATCC MYA-4892 / CBS 513.88 / FGSC A1513).